A 207-amino-acid chain; its full sequence is FMN-dependent NADH:quinone oxidoreductase (207 aa).

Residues Ser-10, 16–18 (SIS), 96–99 (MYNL), and 141–144 (SRGG) contribute to the FMN site.

The protein belongs to the azoreductase type 1 family. Homodimer. FMN is required as a cofactor.

The enzyme catalyses 2 a quinone + NADH + H(+) = 2 a 1,4-benzosemiquinone + NAD(+). It catalyses the reaction N,N-dimethyl-1,4-phenylenediamine + anthranilate + 2 NAD(+) = 2-(4-dimethylaminophenyl)diazenylbenzoate + 2 NADH + 2 H(+). Quinone reductase that provides resistance to thiol-specific stress caused by electrophilic quinones. In terms of biological role, also exhibits azoreductase activity. Catalyzes the reductive cleavage of the azo bond in aromatic azo compounds to the corresponding amines. This chain is FMN-dependent NADH:quinone oxidoreductase, found in Nostoc sp. (strain PCC 7120 / SAG 25.82 / UTEX 2576).